Here is a 283-residue protein sequence, read N- to C-terminus: Pantothenate synthetase (283 aa).

ATP is bound at residue 26-33 (MGNLHEGH). The active-site Proton donor is His-33. Gln-57 lines the (R)-pantoate pocket. Beta-alanine is bound at residue Gln-57. Residue 144-147 (GKKD) participates in ATP binding. Gln-150 serves as a coordination point for (R)-pantoate. Residues Ile-173 and 181 to 184 (LSSR) each bind ATP.

The protein belongs to the pantothenate synthetase family. As to quaternary structure, homodimer.

The protein localises to the cytoplasm. The catalysed reaction is (R)-pantoate + beta-alanine + ATP = (R)-pantothenate + AMP + diphosphate + H(+). It functions in the pathway cofactor biosynthesis; (R)-pantothenate biosynthesis; (R)-pantothenate from (R)-pantoate and beta-alanine: step 1/1. Functionally, catalyzes the condensation of pantoate with beta-alanine in an ATP-dependent reaction via a pantoyl-adenylate intermediate. The sequence is that of Pantothenate synthetase from Polynucleobacter necessarius subsp. necessarius (strain STIR1).